The following is a 449-amino-acid chain: Exodeoxyribonuclease 7 large subunit (449 aa).

Belongs to the XseA family. In terms of assembly, heterooligomer composed of large and small subunits.

Its subcellular location is the cytoplasm. It carries out the reaction Exonucleolytic cleavage in either 5'- to 3'- or 3'- to 5'-direction to yield nucleoside 5'-phosphates.. In terms of biological role, bidirectionally degrades single-stranded DNA into large acid-insoluble oligonucleotides, which are then degraded further into small acid-soluble oligonucleotides. This chain is Exodeoxyribonuclease 7 large subunit, found in Salmonella dublin (strain CT_02021853).